The following is a 342-amino-acid chain: Heat-inducible transcription repressor HrcA (342 aa).

The protein belongs to the HrcA family.

Its function is as follows. Negative regulator of class I heat shock genes (grpE-dnaK-dnaJ and groELS operons). Prevents heat-shock induction of these operons. The chain is Heat-inducible transcription repressor HrcA from Corynebacterium efficiens (strain DSM 44549 / YS-314 / AJ 12310 / JCM 11189 / NBRC 100395).